The sequence spans 128 residues: Ribonuclease P protein component (128 aa).

It belongs to the RnpA family. As to quaternary structure, consists of a catalytic RNA component (M1 or rnpB) and a protein subunit.

It catalyses the reaction Endonucleolytic cleavage of RNA, removing 5'-extranucleotides from tRNA precursor.. In terms of biological role, RNaseP catalyzes the removal of the 5'-leader sequence from pre-tRNA to produce the mature 5'-terminus. It can also cleave other RNA substrates such as 4.5S RNA. The protein component plays an auxiliary but essential role in vivo by binding to the 5'-leader sequence and broadening the substrate specificity of the ribozyme. The polypeptide is Ribonuclease P protein component (Prochlorococcus marinus (strain MIT 9215)).